The chain runs to 1249 residues: AMB antimetabolite synthetase AmbB (1249 aa).

The interval 245 to 633 (FEAQARRTPQ…LGRLDDQVKF (389 aa)) is adenylation. A disordered region spans residues 716–735 (IDRKALPRPQATGAEPQALP). Residues 734-809 (LPSDPLEQAL…ALLELLRQAA (76 aa)) form the Carrier domain. Ser768 carries the post-translational modification O-(pantetheine 4'-phosphoryl)serine. Residues 823-1150 (GLSLAERRLW…CVTQALRQRG (328 aa)) form a condensation region.

It belongs to the NRP synthetase family. Pantetheine 4'-phosphate serves as cofactor.

The catalysed reaction is holo-[peptidyl-carrier protein] + L-alanine + ATP = L-alanyl-[peptidyl-carrier protein] + AMP + diphosphate. Its function is as follows. Involved in the biosynthesis of the antimetabolite L-2-amino-4-methoxy-trans-3-butenoic acid (AMB), a non-proteinogenic amino acid which is toxic for prokaryotes and eukaryotes. Adenylates L-alanine and loads it onto its peptidyl carrier domain via a thioester linkage to the phosphopanthetheine moiety. In addition, loads activated L-Ala in trans onto the second carrier domain of AmbE. Can also activate L-Ser, Gly and D-Ala, albeit to a lower extent. The condensation domain of AmbB probably condenses the activated L-Ala and the L-Glu loaded on AmbE to form a L-Glu-L-Ala dipeptide at the first carrier domain of AmbE. The protein is AMB antimetabolite synthetase AmbB of Pseudomonas aeruginosa (strain ATCC 15692 / DSM 22644 / CIP 104116 / JCM 14847 / LMG 12228 / 1C / PRS 101 / PAO1).